The sequence spans 339 residues: Phosphate acyltransferase (339 aa).

This sequence belongs to the PlsX family. In terms of assembly, homodimer. Probably interacts with PlsY.

Its subcellular location is the cytoplasm. It carries out the reaction a fatty acyl-[ACP] + phosphate = an acyl phosphate + holo-[ACP]. It functions in the pathway lipid metabolism; phospholipid metabolism. In terms of biological role, catalyzes the reversible formation of acyl-phosphate (acyl-PO(4)) from acyl-[acyl-carrier-protein] (acyl-ACP). This enzyme utilizes acyl-ACP as fatty acyl donor, but not acyl-CoA. This chain is Phosphate acyltransferase, found in Clostridium perfringens (strain ATCC 13124 / DSM 756 / JCM 1290 / NCIMB 6125 / NCTC 8237 / Type A).